A 258-amino-acid polypeptide reads, in one-letter code: Ribosomal RNA small subunit methyltransferase J (258 aa).

Residues 123 to 124 (ER) and Asp177 each bind S-adenosyl-L-methionine. The segment at 232–258 (IDGPKPSHSLEGKSSRYDIYPKKALKA) is disordered. The span at 239–252 (HSLEGKSSRYDIYP) shows a compositional bias: basic and acidic residues.

This sequence belongs to the methyltransferase superfamily. RsmJ family.

It localises to the cytoplasm. The enzyme catalyses guanosine(1516) in 16S rRNA + S-adenosyl-L-methionine = N(2)-methylguanosine(1516) in 16S rRNA + S-adenosyl-L-homocysteine + H(+). In terms of biological role, specifically methylates the guanosine in position 1516 of 16S rRNA. This Pseudomonas putida (strain ATCC 47054 / DSM 6125 / CFBP 8728 / NCIMB 11950 / KT2440) protein is Ribosomal RNA small subunit methyltransferase J.